Here is a 593-residue protein sequence, read N- to C-terminus: Transcription factor ATEG_07667 (593 aa).

The segment at residues 18-47 is a DNA-binding region (zn(2)-C6 fungal-type); it reads CTQCYKAKCRCVRTPSGDTCERCIRLKKRC.

It localises to the nucleus. Transcriptional regulator that regulates both the azasperpyranone A biosynthesis clusters A and B. Specifically up-regulates the expression of the cluster A and B specific transcription factors ATEG_03638 and ATEG_07666, which in turn activate the expression of their respective clusters. The chain is Transcription factor ATEG_07667 from Aspergillus terreus (strain NIH 2624 / FGSC A1156).